We begin with the raw amino-acid sequence, 215 residues long: 3-demethoxyubiquinol 3-hydroxylase (215 aa).

The Fe cation site is built by Glu64, Glu94, His97, Glu146, Glu178, and His181.

The protein belongs to the COQ7 family. Requires Fe cation as cofactor.

The protein resides in the cell membrane. The enzyme catalyses a 5-methoxy-2-methyl-3-(all-trans-polyprenyl)benzene-1,4-diol + AH2 + O2 = a 3-demethylubiquinol + A + H2O. It participates in cofactor biosynthesis; ubiquinone biosynthesis. Functionally, catalyzes the hydroxylation of 2-nonaprenyl-3-methyl-6-methoxy-1,4-benzoquinol during ubiquinone biosynthesis. This Pseudomonas fluorescens (strain ATCC BAA-477 / NRRL B-23932 / Pf-5) protein is 3-demethoxyubiquinol 3-hydroxylase.